We begin with the raw amino-acid sequence, 114 residues long: DNA-directed RNA polymerases II, IV and V subunit 9B (114 aa).

Positions 7, 10, 29, 32, 76, 79, 103, and 108 each coordinate Zn(2+). Residues 72 to 113 (KAVRCAKCQHGEAVFFQATARGEEGMTLFFVCCNPNCSHRWR) form a TFIIS-type zinc finger.

It belongs to the archaeal RpoM/eukaryotic RPA12/RPB9/RPC11 RNA polymerase family. In terms of assembly, component of the RNA polymerase II, IV and V complexes. Interacts with NRPD1.

The protein resides in the nucleus. It localises to the nucleolus. DNA-dependent RNA polymerase catalyzes the transcription of DNA into RNA using the four ribonucleoside triphosphates as substrates. Component of RNA polymerase II which synthesizes mRNA precursors and many functional non-coding RNAs. Pol II is the central component of the basal RNA polymerase II transcription machinery. It is composed of mobile elements that move relative to each other. Component of RNA polymerases IV and V which mediate short-interfering RNAs (siRNA) accumulation and subsequent RNA-directed DNA methylation-dependent (RdDM) transcriptional gene silencing (TGS) of endogenous repeated sequences, including transposable elements. Required for RNA silencing. This chain is DNA-directed RNA polymerases II, IV and V subunit 9B (NRPB9B), found in Arabidopsis thaliana (Mouse-ear cress).